Reading from the N-terminus, the 184-residue chain is Photosystem I assembly protein Ycf4 (184 aa).

2 helical membrane-spanning segments follow: residues 19 to 39 (ISNF…LLVG) and 57 to 77 (IVFF…LFIS).

It belongs to the Ycf4 family.

The protein localises to the plastid. It localises to the chloroplast thylakoid membrane. In terms of biological role, seems to be required for the assembly of the photosystem I complex. The chain is Photosystem I assembly protein Ycf4 from Nymphaea alba (White water-lily).